Consider the following 1420-residue polypeptide: DNA-directed RNA polymerase subunit beta' (1420 aa).

4 residues coordinate Zn(2+): Cys71, Cys73, Cys86, and Cys89. Residues Asp461, Asp463, and Asp465 each coordinate Mg(2+). Residues Cys815, Cys889, Cys896, and Cys899 each coordinate Zn(2+).

The protein belongs to the RNA polymerase beta' chain family. In terms of assembly, the RNAP catalytic core consists of 2 alpha, 1 beta, 1 beta' and 1 omega subunit. When a sigma factor is associated with the core the holoenzyme is formed, which can initiate transcription. Mg(2+) is required as a cofactor. It depends on Zn(2+) as a cofactor.

The catalysed reaction is RNA(n) + a ribonucleoside 5'-triphosphate = RNA(n+1) + diphosphate. DNA-dependent RNA polymerase catalyzes the transcription of DNA into RNA using the four ribonucleoside triphosphates as substrates. The chain is DNA-directed RNA polymerase subunit beta' from Haemophilus ducreyi (strain 35000HP / ATCC 700724).